The chain runs to 367 residues: Dual specificity protein phosphatase 1 (367 aa).

The Rhodanese domain maps to 20-137 (RAAQCLLLDC…FSASCPELCS (118 aa)). Residues 173 to 314 (GPVEILPFLY…LLQFESQVLA (142 aa)) enclose the Tyrosine-protein phosphatase domain. C258 acts as the Phosphocysteine intermediate in catalysis. S359 and S364 each carry phosphoserine; by MAPK1 and MAPK3.

It belongs to the protein-tyrosine phosphatase family. Non-receptor class dual specificity subfamily. Phosphorylation at Ser-359 and Ser-364 by MAPK1/ERK2 and MAPK3/ERK1 reduces its rate of degradation. Post-translationally, 'Lys-48'-linked polyubiquitinated by NEURL3, leading to proteasomal degradation. Expressed at high levels in the lung, liver placenta and pancreas. Moderate levels seen in the heart and skeletal muscle. Lower levels found in the brain and kidney.

The protein localises to the nucleus. The enzyme catalyses O-phospho-L-tyrosyl-[protein] + H2O = L-tyrosyl-[protein] + phosphate. The catalysed reaction is O-phospho-L-seryl-[protein] + H2O = L-seryl-[protein] + phosphate. It carries out the reaction O-phospho-L-threonyl-[protein] + H2O = L-threonyl-[protein] + phosphate. In terms of biological role, dual specificity phosphatase that dephosphorylates MAP kinase MAPK1/ERK2 on both 'Thr-183' and 'Tyr-185', regulating its activity during the meiotic cell cycle. The polypeptide is Dual specificity protein phosphatase 1 (Homo sapiens (Human)).